The chain runs to 324 residues: Bile salt hydrolase/transferase (324 aa).

The Nucleophile; acyl-thioester intermediate role is filled by C2. 2 residues coordinate deoxycholate: C2 and R16. N79 serves as a coordination point for taurine.

This sequence belongs to the peptidase C59 family. As to quaternary structure, homotetramer. The tetramer consists of a dimer of dimers.

The catalysed reaction is glycocholate + H2O = cholate + glycine. The enzyme catalyses glycodeoxycholate + H2O = deoxycholate + glycine. It catalyses the reaction chenodeoxycholate + glycine = glycochenodeoxycholate + H2O. It carries out the reaction cholate + taurine = taurocholate + H2O. The catalysed reaction is taurodeoxycholate + H2O = deoxycholate + taurine. The enzyme catalyses taurochenodeoxycholate + H2O = chenodeoxycholate + taurine. It catalyses the reaction an L-alpha-amino acid + cholate = an N-choloyl-L-alpha-amino acid + H2O. It carries out the reaction an L-alpha-amino acid + taurocholate = an N-choloyl-L-alpha-amino acid + taurine. The catalysed reaction is glycocholate + an L-alpha-amino acid = an N-choloyl-L-alpha-amino acid + glycine. Its pathway is lipid metabolism; bile acid biosynthesis. In terms of biological role, possesses dual functions in bile acid metabolism. Acts as a bile salt hydrolase that catalyzes the deconjugation of glycine- and taurine-linked bile salts, which occurs naturally in the intestines of animals, releasing amino acid residues and deconjugated bile salts (bile acids). Can hydrolyze the amide bond in the bile salts glycocholate (GCA), glycodeoxycholate (GDCA), glycochenodeoxycholate (GCDCA), taurocholate (TCA), taurodeoxycholate (TDCA) and taurochenodeoxycholate (TCDCA). Shows a preference for glycine-conjugated bile acids as substrates. Also acts as an amine N-acyltransferase that conjugates a wide variety of amino acids to conjugated and non-conjugated bile acids, thus producing bacterial bile acid amidates (BBAAs) - also named microbially conjugated bile acids (MCBAs) - in the gastrointestinal tract. These BBAAs may facilitate communication between the microbiota and host through the activation of host ligand-activated transcription factors. This Lactiplantibacillus plantarum (strain ATCC BAA-793 / NCIMB 8826 / WCFS1) (Lactobacillus plantarum) protein is Bile salt hydrolase/transferase.